A 532-amino-acid chain; its full sequence is MEDKRIVLAIILSLVVFLGWHSFAEYMGWISPKVQHVANERHSSVDQTATSNIALDSVQSVFSPPTGKDVYIETPLYIAKIHSSGGILSSFILKKYKVNLDNTSPLVNLVSPEASQAMPLGITLNGQPSWSNGNWSFLGGDLYLKPGETKELTFVGIVNGVKIIRIFTFNADSYLIHEKLQLASEKQNSCPTKVGLLVAATPFGTGQYDPTRMAWSIKDSFKEETSIDTLKEKGIQESGEFNWGGVMSNYFMNVVALSDPLYLTIKGRIQNDVWRVALERSNVLIPAEGTTSITVNWWFGPKDRELLSRAPDKLENAIDFGMFSIIAKPLLTALTFFYEYTGNWGVAIIVLTLCIKIVFWPLSQKSYNSMEQMKKLQPMMQKLREKYANDRDTLNREIMQLYKTYKVNPAGGCLPILLQIPVFIGLYQALLNSIELRHATFIYYLPFTHLVWLADLSAADPFYITPLLMGASMFLQQKLTPASGDPTQQKIMMVMPIIFTVMFLNFPAGLVIYWLFNNLLSIGQQWWMLRKA.

Transmembrane regions (helical) follow at residues 6 to 26 (IVLAIILSLVVFLGWHSFAEY), 317 to 337 (AIDFGMFSIIAKPLLTALTFF), 342 to 362 (GNWGVAIIVLTLCIKIVFWPL), 411 to 431 (GGCLPILLQIPVFIGLYQALL), 451 to 473 (VWLADLSAADPFYITPLLMGASM), and 496 to 516 (PIIFTVMFLNFPAGLVIYWLF).

Belongs to the OXA1/ALB3/YidC family. Type 1 subfamily. Interacts with the Sec translocase complex via SecD. Specifically interacts with transmembrane segments of nascent integral membrane proteins during membrane integration.

It is found in the cell membrane. In terms of biological role, required for the insertion and/or proper folding and/or complex formation of integral membrane proteins into the membrane. Involved in integration of membrane proteins that insert both dependently and independently of the Sec translocase complex, as well as at least some lipoproteins. Aids folding of multispanning membrane proteins. This Lawsonia intracellularis (strain PHE/MN1-00) protein is Membrane protein insertase YidC.